Consider the following 79-residue polypeptide: Major outer membrane lipoprotein Lpp 2 (79 aa).

Residues 1–21 (MNRTNKLILGAVVLGSTLLAG) form the signal peptide. The N-palmitoyl cysteine moiety is linked to residue Cys-22. Cys-22 carries S-diacylglycerol cysteine lipidation. 2 repeats span residues 25–35 (NAKIDQLSSDV) and 39–49 (SAKVDQLSNDV). The stretch at 28 to 69 (IDQLSSDVQTLSAKVDQLSNDVNAMRSDVQAAKDDAARANQR) forms a coiled coil. Residue Lys-79 is modified to N6-murein peptidoglycan lysine.

It belongs to the Lpp family. In terms of assembly, homotrimer.

It localises to the cell outer membrane. The protein localises to the secreted. Its subcellular location is the cell wall. Its function is as follows. A highly abundant outer membrane lipoprotein that controls the distance between the inner and outer membranes. The only protein known to be covalently linked to the peptidoglycan network (PGN). Also non-covalently binds the PGN. The link between the cell outer membrane and PGN contributes to maintenance of the structural and functional integrity of the cell envelope, and maintains the correct distance between the PGN and the outer membrane. The protein is Major outer membrane lipoprotein Lpp 2 of Salmonella typhi.